Reading from the N-terminus, the 643-residue chain is tRNA 5-methylaminomethyl-2-thiouridine biosynthesis bifunctional protein MnmC (643 aa).

The interval 1 to 223 is tRNA (mnm(5)s(2)U34)-methyltransferase; that stretch reads MPDRLVSATL…VDDRLVGDYA (223 aa). The interval 247–643 is FAD-dependent cmnm(5)s(2)U34 oxidoreductase; sequence IGAGLAGCAV…LRARRVGSAG (397 aa).

It in the N-terminal section; belongs to the methyltransferase superfamily. tRNA (mnm(5)s(2)U34)-methyltransferase family. In the C-terminal section; belongs to the DAO family. FAD is required as a cofactor.

The protein resides in the cytoplasm. It catalyses the reaction 5-aminomethyl-2-thiouridine(34) in tRNA + S-adenosyl-L-methionine = 5-methylaminomethyl-2-thiouridine(34) in tRNA + S-adenosyl-L-homocysteine + H(+). Catalyzes the last two steps in the biosynthesis of 5-methylaminomethyl-2-thiouridine (mnm(5)s(2)U) at the wobble position (U34) in tRNA. Catalyzes the FAD-dependent demodification of cmnm(5)s(2)U34 to nm(5)s(2)U34, followed by the transfer of a methyl group from S-adenosyl-L-methionine to nm(5)s(2)U34, to form mnm(5)s(2)U34. The polypeptide is tRNA 5-methylaminomethyl-2-thiouridine biosynthesis bifunctional protein MnmC (Burkholderia cenocepacia (strain HI2424)).